The following is a 181-amino-acid chain: uncharacterized protein (181 aa).

Positions 1–19 are cleaved as a signal peptide; that stretch reads MRRLLACSAGVLCFSQLGA.

This is an uncharacterized protein from Treponema pallidum (strain Nichols).